Consider the following 386-residue polypeptide: Homeobox protein Hox-A13 (386 aa).

Positions 320–379 (GRKKRVPYTKVQLKELEREYATNKFITKDKRRRISATTNLSERQVTIWFQNRRVKEKKVI) form a DNA-binding region, homeobox.

It belongs to the Abd-B homeobox family. As to quaternary structure, binds DNA as a homodimer. Interacts with MEIS1, MEIS2 and MEIS3.

The protein resides in the nucleus. Its function is as follows. Sequence-specific, AT-rich binding transcription factor which is part of a developmental regulatory system that provides cells with specific positional identities on the anterior-posterior axis. The chain is Homeobox protein Hox-A13 (Hoxa13) from Mus musculus (Mouse).